The sequence spans 243 residues: MEWEDEAYVLSARSHGETGAIVELLTEARGKVAAHVAGAASRRMKPFLQPGARVIVRYRAKVEGQLGSATLEPMGEGPSSLFDDRLALAGLSAAAAVAAAALPEREAHPGAFHALEALIRVLEIPEIWPAVYVRYEAGLLQELGFGLDLSKCAATGAFDDLVYVSPRTGRAVSREAGKPYHDKLLPLPPFMLSSQGGLAEGDVKAGLDITGHFLEQFVFGPLNRPLPPARLWLLDRLAEADKL.

This sequence belongs to the RecO family.

Involved in DNA repair and RecF pathway recombination. In Caulobacter vibrioides (strain NA1000 / CB15N) (Caulobacter crescentus), this protein is DNA repair protein RecO.